The primary structure comprises 630 residues: tRNA uridine 5-carboxymethylaminomethyl modification enzyme MnmG (630 aa).

Residues 14 to 19, V126, and S181 contribute to the FAD site; that span reads GAGHAG. Residue 273–287 participates in NAD(+) binding; the sequence is GPRYCPSIEDKVVRF. Q370 provides a ligand contact to FAD.

The protein belongs to the MnmG family. As to quaternary structure, homodimer. Heterotetramer of two MnmE and two MnmG subunits. It depends on FAD as a cofactor.

It is found in the cytoplasm. NAD-binding protein involved in the addition of a carboxymethylaminomethyl (cmnm) group at the wobble position (U34) of certain tRNAs, forming tRNA-cmnm(5)s(2)U34. The sequence is that of tRNA uridine 5-carboxymethylaminomethyl modification enzyme MnmG from Alkaliphilus metalliredigens (strain QYMF).